The following is a 332-amino-acid chain: Beta-ketoacyl-[acyl-carrier-protein] synthase III (332 aa).

Residues Cys-114 and His-255 contribute to the active site. Residues Gln-256–Arg-260 form an ACP-binding region. The active site involves Asn-285.

The protein belongs to the thiolase-like superfamily. FabH family. In terms of assembly, homodimer.

The protein resides in the cytoplasm. The enzyme catalyses malonyl-[ACP] + acetyl-CoA + H(+) = 3-oxobutanoyl-[ACP] + CO2 + CoA. It functions in the pathway lipid metabolism; fatty acid biosynthesis. Its function is as follows. Catalyzes the condensation reaction of fatty acid synthesis by the addition to an acyl acceptor of two carbons from malonyl-ACP. Catalyzes the first condensation reaction which initiates fatty acid synthesis and may therefore play a role in governing the total rate of fatty acid production. Possesses both acetoacetyl-ACP synthase and acetyl transacylase activities. Its substrate specificity determines the biosynthesis of branched-chain and/or straight-chain of fatty acids. This Sulfurimonas denitrificans (strain ATCC 33889 / DSM 1251) (Thiomicrospira denitrificans (strain ATCC 33889 / DSM 1251)) protein is Beta-ketoacyl-[acyl-carrier-protein] synthase III.